A 336-amino-acid polypeptide reads, in one-letter code: Phosphate acyltransferase (336 aa).

The protein belongs to the PlsX family. As to quaternary structure, homodimer. Probably interacts with PlsY.

The protein resides in the cytoplasm. It catalyses the reaction a fatty acyl-[ACP] + phosphate = an acyl phosphate + holo-[ACP]. It participates in lipid metabolism; phospholipid metabolism. Catalyzes the reversible formation of acyl-phosphate (acyl-PO(4)) from acyl-[acyl-carrier-protein] (acyl-ACP). This enzyme utilizes acyl-ACP as fatty acyl donor, but not acyl-CoA. The chain is Phosphate acyltransferase from Pseudomonas aeruginosa (strain UCBPP-PA14).